The chain runs to 201 residues: tRNA (guanine-N(7)-)-methyltransferase (201 aa).

4 residues coordinate S-adenosyl-L-methionine: glutamate 34, glutamate 59, aspartate 86, and aspartate 107. Residue aspartate 107 is part of the active site. Substrate-binding positions include lysine 111, aspartate 143, and 181 to 184 (TDYE).

Belongs to the class I-like SAM-binding methyltransferase superfamily. TrmB family.

It catalyses the reaction guanosine(46) in tRNA + S-adenosyl-L-methionine = N(7)-methylguanosine(46) in tRNA + S-adenosyl-L-homocysteine. Its pathway is tRNA modification; N(7)-methylguanine-tRNA biosynthesis. Catalyzes the formation of N(7)-methylguanine at position 46 (m7G46) in tRNA. This chain is tRNA (guanine-N(7)-)-methyltransferase, found in Mycoplasma mobile (strain ATCC 43663 / 163K / NCTC 11711) (Mesomycoplasma mobile).